A 398-amino-acid chain; its full sequence is Acetate kinase (398 aa).

Mg(2+) is bound at residue N7. K14 is a binding site for ATP. Residue R91 participates in substrate binding. D148 (proton donor/acceptor) is an active-site residue. ATP is bound by residues 208 to 212 (HIGNG), 283 to 285 (DMR), and 331 to 335 (GVGEN). Residue E384 participates in Mg(2+) binding.

The protein belongs to the acetokinase family. As to quaternary structure, homodimer. Requires Mg(2+) as cofactor. Mn(2+) is required as a cofactor.

The protein localises to the cytoplasm. The enzyme catalyses acetate + ATP = acetyl phosphate + ADP. The protein operates within metabolic intermediate biosynthesis; acetyl-CoA biosynthesis; acetyl-CoA from acetate: step 1/2. In terms of biological role, catalyzes the formation of acetyl phosphate from acetate and ATP. Can also catalyze the reverse reaction. The chain is Acetate kinase from Bacteroides fragilis (strain ATCC 25285 / DSM 2151 / CCUG 4856 / JCM 11019 / LMG 10263 / NCTC 9343 / Onslow / VPI 2553 / EN-2).